The sequence spans 176 residues: Prepronociceptin (176 aa).

An N-terminal signal peptide occupies residues M1 to S19. Propeptides lie at residues S20 to L95 and T169 to V176.

The protein belongs to the opioid neuropeptide precursor family. Post-translationally, specific enzymatic cleavages at paired basic residues probably yield other active peptides besides nociceptin. The N-terminal domain contains 6 conserved cysteines thought to be involved in disulfide bonding and/or processing. Predominantly expressed in the brain and spinal cord. Also expressed and secreted by peripheral blood neutrophils following degranulation.

The protein resides in the secreted. Functionally, ligand of the opioid receptor-like receptor OPRL1. It may act as a transmitter in the brain by modulating nociceptive and locomotor behavior. May be involved in neuronal differentiation and development. Blocks nociceptin action in pain transmission by inhibiting nociceptin-induced hyperalgesia and allodynia. Its function is as follows. Has potent analgesic activity. The chain is Prepronociceptin (PNOC) from Homo sapiens (Human).